We begin with the raw amino-acid sequence, 177 residues long: ATP synthase subunit delta (177 aa).

Belongs to the ATPase delta chain family. In terms of assembly, F-type ATPases have 2 components, F(1) - the catalytic core - and F(0) - the membrane proton channel. F(1) has five subunits: alpha(3), beta(3), gamma(1), delta(1), epsilon(1). F(0) has three main subunits: a(1), b(2) and c(10-14). The alpha and beta chains form an alternating ring which encloses part of the gamma chain. F(1) is attached to F(0) by a central stalk formed by the gamma and epsilon chains, while a peripheral stalk is formed by the delta and b chains.

Its subcellular location is the cell inner membrane. Its function is as follows. F(1)F(0) ATP synthase produces ATP from ADP in the presence of a proton or sodium gradient. F-type ATPases consist of two structural domains, F(1) containing the extramembraneous catalytic core and F(0) containing the membrane proton channel, linked together by a central stalk and a peripheral stalk. During catalysis, ATP synthesis in the catalytic domain of F(1) is coupled via a rotary mechanism of the central stalk subunits to proton translocation. Functionally, this protein is part of the stalk that links CF(0) to CF(1). It either transmits conformational changes from CF(0) to CF(1) or is implicated in proton conduction. This is ATP synthase subunit delta from Pseudoalteromonas translucida (strain TAC 125).